We begin with the raw amino-acid sequence, 716 residues long: Penicillin-binding protein 2A (716 aa).

Residues Leu22–Ile42 form a helical membrane-spanning segment. The active-site Acyl-ester intermediate is the Ser397. A compositionally biased stretch (basic and acidic residues) spans Ser689–Glu706. Residues Ser689–Asn716 form a disordered region.

Belongs to the transpeptidase family.

It localises to the cell membrane. It is found in the forespore inner membrane. The enzyme catalyses Preferential cleavage: (Ac)2-L-Lys-D-Ala-|-D-Ala. Also transpeptidation of peptidyl-alanyl moieties that are N-acyl substituents of D-alanine.. The protein operates within cell wall biogenesis; peptidoglycan biosynthesis. In terms of biological role, involved in the synthesis of peptidoglycan associated with cell wall elongation, especially following spore germination. Has a partially redundant function with PBP 1 (ponA) or PBP 4 (pbpD) during spore outgrowth. Plays a redundant role with PbpH in determining the rod shape of the cell during vegetative growth and spore outgrowth. The polypeptide is Penicillin-binding protein 2A (Bacillus subtilis (strain 168)).